A 617-amino-acid polypeptide reads, in one-letter code: Elongation factor 4 (617 aa).

The tr-type G domain occupies 17 to 198 (AIIRNFCIIA…KIVRDLPAPV (182 aa)). GTP contacts are provided by residues 29–34 (DHGKST) and 145–148 (NKID).

This sequence belongs to the TRAFAC class translation factor GTPase superfamily. Classic translation factor GTPase family. LepA subfamily.

The protein resides in the cell membrane. The enzyme catalyses GTP + H2O = GDP + phosphate + H(+). Its function is as follows. Required for accurate and efficient protein synthesis under certain stress conditions. May act as a fidelity factor of the translation reaction, by catalyzing a one-codon backward translocation of tRNAs on improperly translocated ribosomes. Back-translocation proceeds from a post-translocation (POST) complex to a pre-translocation (PRE) complex, thus giving elongation factor G a second chance to translocate the tRNAs correctly. Binds to ribosomes in a GTP-dependent manner. The polypeptide is Elongation factor 4 (Arthrobacter sp. (strain FB24)).